A 180-amino-acid polypeptide reads, in one-letter code: MGSSTGFHHADHVNYSSNLNKEEILEQLLLSYEGLSDGQVNWVCNLSNASSLIWHAYKSLAVDINWAGFYVTQASEENTLILGPFQGKVACQMIQFGKGVCGTAASTKETQIVPDVNKYPGHIACDGETKSEIVVPIISNDGKTLGVIDIDCLDYEGFDHVDKEFLEKLAKLINKSCVFK.

Residues 99-177 (GVCGTAASTK…KLAKLINKSC (79 aa)) form the GAF domain.

Belongs to the free Met sulfoxide reductase family.

The protein localises to the cytoplasm. The protein resides in the nucleus. The enzyme catalyses [thioredoxin]-disulfide + L-methionine + H2O = L-methionine (R)-S-oxide + [thioredoxin]-dithiol. Its function is as follows. Catalyzes the reversible oxidation-reduction of the R-enantiomer of free methionine sulfoxide to methionine. Does not act on S-enantiomer of free methionine sulfoxide or R-enantiomer of dabsylated methionine sulfoxide. Involved in protection against oxidative stress. The sequence is that of Free methionine-R-sulfoxide reductase from Saccharomyces cerevisiae (strain ATCC 204508 / S288c) (Baker's yeast).